Here is a 157-residue protein sequence, read N- to C-terminus: Protein Smg (157 aa).

Belongs to the Smg family.

In Salmonella agona (strain SL483), this protein is Protein Smg.